Here is a 278-residue protein sequence, read N- to C-terminus: Tryptophan synthase alpha chain (278 aa).

Residues glutamate 50 and aspartate 61 each act as proton acceptor in the active site.

It belongs to the TrpA family. As to quaternary structure, tetramer of two alpha and two beta chains.

It carries out the reaction (1S,2R)-1-C-(indol-3-yl)glycerol 3-phosphate + L-serine = D-glyceraldehyde 3-phosphate + L-tryptophan + H2O. Its pathway is amino-acid biosynthesis; L-tryptophan biosynthesis; L-tryptophan from chorismate: step 5/5. The alpha subunit is responsible for the aldol cleavage of indoleglycerol phosphate to indole and glyceraldehyde 3-phosphate. This chain is Tryptophan synthase alpha chain, found in Rhodopseudomonas palustris (strain TIE-1).